The sequence spans 416 residues: Elongation factor 1-gamma 3 (416 aa).

In terms of domain architecture, GST N-terminal spans methionine 1–serine 82. One can recognise a GST C-terminal domain in the interval serine 87–valine 215. Residues proline 213 to leucine 263 form a disordered region. Over residues proline 221–alanine 245 the composition is skewed to basic and acidic residues. Residues proline 256 to lysine 416 enclose the EF-1-gamma C-terminal domain.

As to quaternary structure, EF-1 is composed of four subunits: alpha, beta, delta, and gamma.

In terms of biological role, probably plays a role in anchoring the complex to other cellular components. The protein is Elongation factor 1-gamma 3 of Oryza sativa subsp. japonica (Rice).